Reading from the N-terminus, the 276-residue chain is Pantothenate synthetase (276 aa).

Position 27-34 (27-34) interacts with ATP; the sequence is MGALHRGH. Histidine 34 acts as the Proton donor in catalysis. Position 58 (glutamine 58) interacts with (R)-pantoate. A beta-alanine-binding site is contributed by glutamine 58. Position 147–150 (147–150) interacts with ATP; sequence GKKD. Glutamine 153 lines the (R)-pantoate pocket. ATP is bound by residues valine 176 and 184 to 187; that span reads LSSR.

Belongs to the pantothenate synthetase family. Homodimer.

It localises to the cytoplasm. It catalyses the reaction (R)-pantoate + beta-alanine + ATP = (R)-pantothenate + AMP + diphosphate + H(+). The protein operates within cofactor biosynthesis; (R)-pantothenate biosynthesis; (R)-pantothenate from (R)-pantoate and beta-alanine: step 1/1. In terms of biological role, catalyzes the condensation of pantoate with beta-alanine in an ATP-dependent reaction via a pantoyl-adenylate intermediate. The protein is Pantothenate synthetase of Helicobacter pylori (strain J99 / ATCC 700824) (Campylobacter pylori J99).